Reading from the N-terminus, the 225-residue chain is 3-dehydroquinate dehydratase (225 aa).

3-dehydroquinate-binding positions include Ser6, 30–32 (EWR), and Arg62. Residue His118 is the Proton donor/acceptor of the active site. Lys143 acts as the Schiff-base intermediate with substrate in catalysis. Positions 186, 205, and 209 each coordinate 3-dehydroquinate.

The protein belongs to the type-I 3-dehydroquinase family. As to quaternary structure, homodimer.

It carries out the reaction 3-dehydroquinate = 3-dehydroshikimate + H2O. It functions in the pathway metabolic intermediate biosynthesis; chorismate biosynthesis; chorismate from D-erythrose 4-phosphate and phosphoenolpyruvate: step 3/7. Involved in the third step of the chorismate pathway, which leads to the biosynthesis of aromatic amino acids. Catalyzes the cis-dehydration of 3-dehydroquinate (DHQ) and introduces the first double bond of the aromatic ring to yield 3-dehydroshikimate. The protein is 3-dehydroquinate dehydratase of Streptococcus pneumoniae (strain P1031).